Consider the following 232-residue polypeptide: Multiple organellar RNA editing factor 6, mitochondrial (232 aa).

The transit peptide at 1-67 (MAKTLSRSTA…TIRTRMDRSG (67 aa)) directs the protein to the mitochondrion. Residues 208 to 232 (TNQRGSDKPKYHDRIRNVRRRENMR) are disordered. Positions 212 to 232 (GSDKPKYHDRIRNVRRRENMR) are enriched in basic and acidic residues.

It belongs to the MORF family. In terms of assembly, heterodimers with MORF8/RIP1, MORF3/RIP3, MORF6/RIP6, MORF7/RIP7 and MORF9/RIP9.

It localises to the mitochondrion. In terms of biological role, involved in organellar RNA editing. Required for the processing of few RNA editing sites in mitochondria. The chain is Multiple organellar RNA editing factor 6, mitochondrial from Arabidopsis thaliana (Mouse-ear cress).